A 148-amino-acid polypeptide reads, in one-letter code: MFRTMMKSKIHRATVTHADLHYVGSVTVDQDLMDAADLLEGEQVCIVDIDNGARLETYVIAGERGTGVIGINGAAAHLVKPGDLVILIAYGVMNEQEVKEYSPRVVFVDADNKQIELGSDPAHAPEGSGLITPRMLSTLEASRESSLV.

The active-site Schiff-base intermediate with substrate; via pyruvic acid is serine 25. Serine 25 carries the pyruvic acid (Ser) modification. Residue threonine 57 coordinates substrate. The active-site Proton donor is tyrosine 58. Residue 73–75 (GAA) coordinates substrate.

Belongs to the PanD family. As to quaternary structure, heterooctamer of four alpha and four beta subunits. Pyruvate serves as cofactor. Is synthesized initially as an inactive proenzyme, which is activated by self-cleavage at a specific serine bond to produce a beta-subunit with a hydroxyl group at its C-terminus and an alpha-subunit with a pyruvoyl group at its N-terminus.

It localises to the cytoplasm. The catalysed reaction is L-aspartate + H(+) = beta-alanine + CO2. The protein operates within cofactor biosynthesis; (R)-pantothenate biosynthesis; beta-alanine from L-aspartate: step 1/1. Catalyzes the pyruvoyl-dependent decarboxylation of aspartate to produce beta-alanine. This is Aspartate 1-decarboxylase from Rhodococcus erythropolis (strain PR4 / NBRC 100887).